The primary structure comprises 348 residues: Probable dual-specificity RNA methyltransferase RlmN (348 aa).

Glu-89 acts as the Proton acceptor in catalysis. In terms of domain architecture, Radical SAM core spans 95 to 330 (ERDHYTLCVS…NFVRFSKGVE (236 aa)). Cys-102 and Cys-335 are joined by a disulfide. Positions 109, 113, and 116 each coordinate [4Fe-4S] cluster. S-adenosyl-L-methionine contacts are provided by residues 157-158 (GE), Ser-189, 214-216 (SLN), and Asn-292. Cys-335 (S-methylcysteine intermediate) is an active-site residue.

Belongs to the radical SAM superfamily. RlmN family. It depends on [4Fe-4S] cluster as a cofactor.

It is found in the cytoplasm. The catalysed reaction is adenosine(2503) in 23S rRNA + 2 reduced [2Fe-2S]-[ferredoxin] + 2 S-adenosyl-L-methionine = 2-methyladenosine(2503) in 23S rRNA + 5'-deoxyadenosine + L-methionine + 2 oxidized [2Fe-2S]-[ferredoxin] + S-adenosyl-L-homocysteine. It catalyses the reaction adenosine(37) in tRNA + 2 reduced [2Fe-2S]-[ferredoxin] + 2 S-adenosyl-L-methionine = 2-methyladenosine(37) in tRNA + 5'-deoxyadenosine + L-methionine + 2 oxidized [2Fe-2S]-[ferredoxin] + S-adenosyl-L-homocysteine. In terms of biological role, specifically methylates position 2 of adenine 2503 in 23S rRNA and position 2 of adenine 37 in tRNAs. The chain is Probable dual-specificity RNA methyltransferase RlmN from Aquifex aeolicus (strain VF5).